Reading from the N-terminus, the 203-residue chain is Transcriptional regulator GfcR (203 aa).

The protein belongs to the purine/pyrimidine phosphoribosyltransferase family. GfcR subfamily.

The protein is Transcriptional regulator GfcR of Methanothrix thermoacetophila (strain DSM 6194 / JCM 14653 / NBRC 101360 / PT) (Methanosaeta thermophila).